A 139-amino-acid chain; its full sequence is Large ribosomal subunit protein uL13 (139 aa).

This sequence belongs to the universal ribosomal protein uL13 family. As to quaternary structure, part of the 50S ribosomal subunit.

Its function is as follows. This protein is one of the early assembly proteins of the 50S ribosomal subunit, although it is not seen to bind rRNA by itself. It is important during the early stages of 50S assembly. The chain is Large ribosomal subunit protein uL13 from Wolinella succinogenes (strain ATCC 29543 / DSM 1740 / CCUG 13145 / JCM 31913 / LMG 7466 / NCTC 11488 / FDC 602W) (Vibrio succinogenes).